A 551-amino-acid chain; its full sequence is Chaperonin GroEL (551 aa).

ATP-binding positions include 30–33, lysine 51, 87–91, glycine 415, 479–481, and aspartate 495; these read TLGP, DGTTT, and NAA. A disordered region spans residues 523 to 551; it reads DSPKEDKSSDMPSPSAGGMGGMGGMGGMM. Over residues 539-551 the composition is skewed to gly residues; sequence GGMGGMGGMGGMM.

The protein belongs to the chaperonin (HSP60) family. In terms of assembly, forms a cylinder of 14 subunits composed of two heptameric rings stacked back-to-back. Interacts with the co-chaperonin GroES.

It is found in the cytoplasm. The enzyme catalyses ATP + H2O + a folded polypeptide = ADP + phosphate + an unfolded polypeptide.. Together with its co-chaperonin GroES, plays an essential role in assisting protein folding. The GroEL-GroES system forms a nano-cage that allows encapsulation of the non-native substrate proteins and provides a physical environment optimized to promote and accelerate protein folding. This is Chaperonin GroEL from Buchnera aphidicola subsp. Chaetophorus leucomelas.